The chain runs to 467 residues: Transcription factor bHLH3 (467 aa).

Positions 316–365 (EEALNHVEAERQRREKLNQRFYALRAVVPNISKMDKASLLADAITYITDM) constitute a bHLH domain.

Homodimer.

Its subcellular location is the nucleus. The sequence is that of Transcription factor bHLH3 (BHLH3) from Arabidopsis thaliana (Mouse-ear cress).